The sequence spans 357 residues: Membrane-bound lytic murein transglycosylase C (357 aa).

The first 15 residues, 1–15, serve as a signal peptide directing secretion; it reads MKKYLLLALLPFLYA. Cys-16 carries the N-palmitoyl cysteine lipid modification. Cys-16 carries S-diacylglycerol cysteine lipidation.

The protein belongs to the transglycosylase Slt family.

Its subcellular location is the cell outer membrane. The catalysed reaction is Exolytic cleavage of the (1-&gt;4)-beta-glycosidic linkage between N-acetylmuramic acid (MurNAc) and N-acetylglucosamine (GlcNAc) residues in peptidoglycan, from either the reducing or the non-reducing ends of the peptidoglycan chains, with concomitant formation of a 1,6-anhydrobond in the MurNAc residue.. In terms of biological role, murein-degrading enzyme. May play a role in recycling of muropeptides during cell elongation and/or cell division. This chain is Membrane-bound lytic murein transglycosylase C, found in Haemophilus influenzae (strain PittEE).